The primary structure comprises 58 residues: Large ribosomal subunit protein uL30 (58 aa).

This sequence belongs to the universal ribosomal protein uL30 family. In terms of assembly, part of the 50S ribosomal subunit.

The protein is Large ribosomal subunit protein uL30 of Blochmanniella floridana.